The primary structure comprises 695 residues: Threonine--tRNA ligase (695 aa).

Positions 6–75 constitute a TGS domain; the sequence is SAIFVNTTDT…ETTATFTAVP (70 aa). The tract at residues 274–580 is catalytic; sequence DHRRLGTELD…LLEHYAGAFP (307 aa). Residues Cys379, His430, and His557 each contribute to the Zn(2+) site.

The protein belongs to the class-II aminoacyl-tRNA synthetase family. As to quaternary structure, homodimer. It depends on Zn(2+) as a cofactor.

It is found in the cytoplasm. It carries out the reaction tRNA(Thr) + L-threonine + ATP = L-threonyl-tRNA(Thr) + AMP + diphosphate + H(+). Its function is as follows. Catalyzes the attachment of threonine to tRNA(Thr) in a two-step reaction: L-threonine is first activated by ATP to form Thr-AMP and then transferred to the acceptor end of tRNA(Thr). Also edits incorrectly charged L-seryl-tRNA(Thr). This chain is Threonine--tRNA ligase, found in Corynebacterium glutamicum (strain ATCC 13032 / DSM 20300 / JCM 1318 / BCRC 11384 / CCUG 27702 / LMG 3730 / NBRC 12168 / NCIMB 10025 / NRRL B-2784 / 534).